Consider the following 127-residue polypeptide: uncharacterized protein (127 aa).

The tract at residues 69 to 94 is disordered; the sequence is GDGGSVPEKGKHGILGAQGQEHPGLN.

This is an uncharacterized protein from Homo sapiens (Human).